A 328-amino-acid chain; its full sequence is 4-hydroxythreonine-4-phosphate dehydrogenase (328 aa).

The substrate site is built by H133 and T134. A divalent metal cation-binding residues include H163, H208, and H263. The substrate site is built by K271, N280, and R289.

The protein belongs to the PdxA family. Homodimer. Zn(2+) is required as a cofactor. Mg(2+) serves as cofactor. Requires Co(2+) as cofactor.

The protein resides in the cytoplasm. It catalyses the reaction 4-(phosphooxy)-L-threonine + NAD(+) = 3-amino-2-oxopropyl phosphate + CO2 + NADH. Its pathway is cofactor biosynthesis; pyridoxine 5'-phosphate biosynthesis; pyridoxine 5'-phosphate from D-erythrose 4-phosphate: step 4/5. Catalyzes the NAD(P)-dependent oxidation of 4-(phosphooxy)-L-threonine (HTP) into 2-amino-3-oxo-4-(phosphooxy)butyric acid which spontaneously decarboxylates to form 3-amino-2-oxopropyl phosphate (AHAP). The chain is 4-hydroxythreonine-4-phosphate dehydrogenase from Chromobacterium violaceum (strain ATCC 12472 / DSM 30191 / JCM 1249 / CCUG 213 / NBRC 12614 / NCIMB 9131 / NCTC 9757 / MK).